Reading from the N-terminus, the 359-residue chain is Ornithine carbamoyltransferase, mitochondrial (359 aa).

The transit peptide at 1–24 (MASLRSVLKSQSLRHTVRSYSSQT) directs the protein to the mitochondrion. Carbamoyl phosphate-binding positions include 87-90 (STRT), Arg-138, His-165, and Gln-168. Residues Asn-205, Asp-271, Ser-275, and Met-276 each coordinate L-ornithine. The Proton acceptor role is filled by Cys-313. Residues 313–314 (CL) and Arg-340 contribute to the carbamoyl phosphate site.

It belongs to the aspartate/ornithine carbamoyltransferase superfamily. OTCase family. Homotrimer.

It is found in the mitochondrion matrix. The catalysed reaction is carbamoyl phosphate + L-ornithine = L-citrulline + phosphate + H(+). It participates in amino-acid biosynthesis; L-arginine biosynthesis; L-arginine from L-ornithine and carbamoyl phosphate: step 1/3. In Emericella nidulans (strain FGSC A4 / ATCC 38163 / CBS 112.46 / NRRL 194 / M139) (Aspergillus nidulans), this protein is Ornithine carbamoyltransferase, mitochondrial (argB).